Reading from the N-terminus, the 469-residue chain is Cytoplasmic tRNA 2-thiolation protein 2 (469 aa).

The protein belongs to the CTU2/NCS2 family.

It is found in the cytoplasm. It participates in tRNA modification; 5-methoxycarbonylmethyl-2-thiouridine-tRNA biosynthesis. Its function is as follows. Plays a central role in 2-thiolation of mcm(5)S(2)U at tRNA wobble positions of tRNA(Lys), tRNA(Glu) and tRNA(Gln). May act by forming a heterodimer with NCS6 that ligates sulfur from thiocarboxylated URM1 onto the uridine of tRNAs at wobble position. Prior mcm(5) tRNA modification by the elongator complex is required for 2-thiolation. May also be involved in protein urmylation. This Candida glabrata (strain ATCC 2001 / BCRC 20586 / JCM 3761 / NBRC 0622 / NRRL Y-65 / CBS 138) (Yeast) protein is Cytoplasmic tRNA 2-thiolation protein 2.